Consider the following 252-residue polypeptide: Ribosome assembly factor mrt4 (252 aa).

This sequence belongs to the universal ribosomal protein uL10 family. Associates with the pre-60S ribosomal particle.

Its subcellular location is the nucleus. The protein resides in the nucleolus. The protein localises to the cytoplasm. Component of the ribosome assembly machinery. Nuclear paralog of the ribosomal protein P0, it binds pre-60S subunits at an early stage of assembly in the nucleolus, and is replaced by P0 in cytoplasmic pre-60S subunits and mature 80S ribosomes. The sequence is that of Ribosome assembly factor mrt4 from Neurospora crassa (strain ATCC 24698 / 74-OR23-1A / CBS 708.71 / DSM 1257 / FGSC 987).